A 276-amino-acid chain; its full sequence is uncharacterized protein (276 aa).

The active-site Proton donor is the Tyr47. Position 110 (His110) interacts with substrate.

This sequence belongs to the aldo/keto reductase family.

Its subcellular location is the cytoplasm. It is found in the nucleus. This is an uncharacterized protein from Schizosaccharomyces pombe (strain 972 / ATCC 24843) (Fission yeast).